We begin with the raw amino-acid sequence, 468 residues long: N-acetyltransferase SLI1 (468 aa).

The protein localises to the endoplasmic reticulum. Confers resistance to the sphingolipid biosynthesis inhibitor drug myriocin (ISP-1). Inactivates ISP-1 by converting it into N-acetyl-myriocin. Cooperates with YPK1 in mediating resistance to myriocin. This chain is N-acetyltransferase SLI1 (SLI1), found in Saccharomyces cerevisiae (strain ATCC 204508 / S288c) (Baker's yeast).